Here is a 461-residue protein sequence, read N- to C-terminus: tRNA modification GTPase MnmE (461 aa).

(6S)-5-formyl-5,6,7,8-tetrahydrofolate-binding residues include Arg-23, Glu-84, and Lys-123. One can recognise a TrmE-type G domain in the interval 219-382 (GVQVVIGGRP…LLDHLTDTVA (164 aa)). Residues 229–234 (NAGKST), 248–254 (SETPGTT), 273–276 (DTAG), and 337–340 (NKAD) contribute to the GTP site. Mg(2+) contacts are provided by Ser-233 and Thr-254. Residue Lys-461 coordinates (6S)-5-formyl-5,6,7,8-tetrahydrofolate.

It belongs to the TRAFAC class TrmE-Era-EngA-EngB-Septin-like GTPase superfamily. TrmE GTPase family. As to quaternary structure, homodimer. Heterotetramer of two MnmE and two MnmG subunits. Requires K(+) as cofactor.

The protein localises to the cytoplasm. Its function is as follows. Exhibits a very high intrinsic GTPase hydrolysis rate. Involved in the addition of a carboxymethylaminomethyl (cmnm) group at the wobble position (U34) of certain tRNAs, forming tRNA-cmnm(5)s(2)U34. The chain is tRNA modification GTPase MnmE from Salinibacter ruber (strain DSM 13855 / M31).